The primary structure comprises 264 residues: S-adenosylmethionine decarboxylase proenzyme (264 aa).

The Schiff-base intermediate with substrate; via pyruvic acid role is filled by S112. At S112 the chain carries Pyruvic acid (Ser); by autocatalysis. Catalysis depends on H117, which acts as the Proton acceptor; for processing activity. Residue C140 is the Proton donor; for catalytic activity of the active site.

The protein belongs to the prokaryotic AdoMetDC family. Type 2 subfamily. In terms of assembly, heterooctamer of four alpha and four beta chains arranged as a tetramer of alpha/beta heterodimers. It depends on pyruvate as a cofactor. Post-translationally, is synthesized initially as an inactive proenzyme. Formation of the active enzyme involves a self-maturation process in which the active site pyruvoyl group is generated from an internal serine residue via an autocatalytic post-translational modification. Two non-identical subunits are generated from the proenzyme in this reaction, and the pyruvate is formed at the N-terminus of the alpha chain, which is derived from the carboxyl end of the proenzyme. The post-translation cleavage follows an unusual pathway, termed non-hydrolytic serinolysis, in which the side chain hydroxyl group of the serine supplies its oxygen atom to form the C-terminus of the beta chain, while the remainder of the serine residue undergoes an oxidative deamination to produce ammonia and the pyruvoyl group blocking the N-terminus of the alpha chain.

The catalysed reaction is S-adenosyl-L-methionine + H(+) = S-adenosyl 3-(methylsulfanyl)propylamine + CO2. The protein operates within amine and polyamine biosynthesis; S-adenosylmethioninamine biosynthesis; S-adenosylmethioninamine from S-adenosyl-L-methionine: step 1/1. Its function is as follows. Catalyzes the decarboxylation of S-adenosylmethionine to S-adenosylmethioninamine (dcAdoMet), the propylamine donor required for the synthesis of the polyamines spermine and spermidine from the diamine putrescine. This Klebsiella pneumoniae (strain 342) protein is S-adenosylmethionine decarboxylase proenzyme.